Here is a 763-residue protein sequence, read N- to C-terminus: Phosphoglycerol transferase I (763 aa).

A run of 4 helical transmembrane segments spans residues 1–21 (MSELLSFALFLASVLIYAWKA), 26–46 (WWFAATLTVLGLFVVLNITLF), 77–97 (ILPGIGIVLGLTAVFGALGWI), and 108–128 (FGYSLLALLLALGSVDASPAF).

This sequence belongs to the OpgB family.

The protein resides in the cell inner membrane. The enzyme catalyses a phosphatidylglycerol + a membrane-derived-oligosaccharide D-glucose = a 1,2-diacyl-sn-glycerol + a membrane-derived-oligosaccharide 6-(glycerophospho)-D-glucose.. It participates in glycan metabolism; osmoregulated periplasmic glucan (OPG) biosynthesis. Its function is as follows. Transfers a phosphoglycerol residue from phosphatidylglycerol to the membrane-bound nascent glucan backbones. The polypeptide is Phosphoglycerol transferase I (Escherichia coli O139:H28 (strain E24377A / ETEC)).